The following is a 562-amino-acid chain: Phosphatidylinositol 4-phosphate 5-kinase type-1 alpha (562 aa).

The PIPK domain occupies 81-449; sequence TSSALKGAIQ…RFQRFMCNTV (369 aa). Residue K103 forms a Glycyl lysine isopeptide (Lys-Gly) (interchain with G-Cter in ubiquitin) linkage. S486 bears the Phosphoserine mark. Residues 506–526 are disordered; that stretch reads HLGRPDVLPQTPPLEEISEGS.

Interacts with RAC1. Interacts with TUT1. Forms a complex with CDH1/E-cadherin, CTNNB1/beta-catenin and CTNND1 at the plasma membrane upon calcium stimulation. Found in a ternary complex with IRS1 and DGKZ in the absence of insulin stimulation. Interacts with DGKZ. Interacts with PIP4K2C; the interaction inhibits PIP5K1A kinase activity. In terms of tissue distribution, highly expressed in heart, placenta, skeletal muscle, kidney and pancreas. Detected at lower levels in brain, lung and liver.

The protein localises to the cell membrane. The protein resides in the cytoplasm. It is found in the nucleus. Its subcellular location is the nucleus speckle. It localises to the cell projection. The protein localises to the ruffle. The protein resides in the lamellipodium. It carries out the reaction a 1,2-diacyl-sn-glycero-3-phospho-(1D-myo-inositol 4-phosphate) + ATP = a 1,2-diacyl-sn-glycero-3-phospho-(1D-myo-inositol-4,5-bisphosphate) + ADP + H(+). The enzyme catalyses 1-octadecanoyl-2-(5Z,8Z,11Z,14Z)-eicosatetraenoyl-sn-glycero-3-phospho-1D-myo-inositol 4-phosphate + ATP = 1-octadecanoyl-2-(5Z,8Z,11Z,14Z)-eicosatetraenoyl-sn-glycero-3-phospho-1D-myo-inositol 4,5-bisphosphate + ADP + H(+). It catalyses the reaction 1,2-dihexadecanoyl-sn-glycero-3-phospho-(1D-myo-inositol-4-phosphate) + ATP = 1,2-dihexadecanoyl-sn-glycero-3-phospho-(1D-myo-inositol-4,5-bisphosphate) + ADP + H(+). The catalysed reaction is 1-octadecanoyl-2-(9Z)-octadecenoyl-sn-glycero-3-phospho-1D-myo-inositol 4-phosphate + ATP = 1-octadecanoyl-2-(9Z)-octadecenoyl-sn-glycero-3-phospho-1D-myo-inositol 4,5-bisphosphate + ADP + H(+). It carries out the reaction 1-octadecanoyl-2-(9Z)-octadecenoyl-sn-glycero-3-phospho-1D-myo-inositol + ATP = 1-octadecanoyl-2-(9Z)-octadecenoyl-sn-glycero-3-phospho-1D-myo-inositol 5-phosphate + ADP + H(+). The enzyme catalyses 1-octadecanoyl-2-(9Z,12Z)-octadecadienoyl-sn-glycero-3-phospho-1D-myo-inositol + ATP = 1-octadecanoyl-2-(9Z,12Z)-octadecadienoyl-sn-glycero-3-phospho-1D-myo-inositol 5-phosphate + ADP + H(+). It catalyses the reaction 1-octadecanoyl-2-(5Z,8Z,11Z,14Z-eicosatetraenoyl)-sn-glycero-3-phospho-(1D-myo-inositol) + ATP = 1-octadecanoyl-2-(5Z,8Z,11Z,14Z)-eicosatetraenoyl-sn-glycero-3-phospho-1D-myo-inositol 5-phosphate + ADP + H(+). The catalysed reaction is 1,2-di-(9Z,12Z)-octadecadienoyl-sn-glycero-3-phospho-1D-myo-inositol + ATP = 1,2-di(9Z,12Z)-octadecadienoyl-sn-glycero-3-phospho-1D-myo-inositol 5-phosphate + ADP + H(+). Activated by diarachidonoyl phosphatidic acid (DAPA), when 1,2-dipalmitoyl-PI4P is used as a substrate. Its function is as follows. Catalyzes the phosphorylation of phosphatidylinositol 4-phosphate (PtdIns(4)P/PI4P) to form phosphatidylinositol 4,5-bisphosphate (PtdIns(4,5)P2/PIP2), a lipid second messenger that regulates several cellular processes such as signal transduction, vesicle trafficking, actin cytoskeleton dynamics, cell adhesion, and cell motility. PtdIns(4,5)P2 can directly act as a second messenger or can be utilized as a precursor to generate other second messengers: inositol 1,4,5-trisphosphate (IP3), diacylglycerol (DAG) or phosphatidylinositol-3,4,5-trisphosphate (PtdIns(3,4,5)P3/PIP3). PIP5K1A-mediated phosphorylation of PtdIns(4)P is the predominant pathway for PtdIns(4,5)P2 synthesis. Can also use phosphatidylinositol (PtdIns) as substrate in vitro. Together with PIP5K1C, is required for phagocytosis, both enzymes regulating different types of actin remodeling at sequential steps. Promotes particle ingestion by activating the WAS GTPase-binding protein that induces Arp2/3 dependent actin polymerization at the nascent phagocytic cup. Together with PIP5K1B, is required, after stimulation by G-protein coupled receptors, for the synthesis of IP3 that will induce stable platelet adhesion. Recruited to the plasma membrane by the E-cadherin/beta-catenin complex where it provides the substrate PtdIns(4,5)P2 for the production of PtdIns(3,4,5)P3, IP3 and DAG, that will mobilize internal calcium and drive keratinocyte differentiation. Positively regulates insulin-induced translocation of SLC2A4 to the cell membrane in adipocytes. Together with PIP5K1C has a role during embryogenesis. Independently of its catalytic activity, is required for membrane ruffling formation, actin organization and focal adhesion formation during directional cell migration by controlling integrin-induced translocation of the small GTPase RAC1 to the plasma membrane. Also functions in the nucleus where it acts as an activator of TUT1 adenylyltransferase activity in nuclear speckles, thereby regulating mRNA polyadenylation of a select set of mRNAs. This Homo sapiens (Human) protein is Phosphatidylinositol 4-phosphate 5-kinase type-1 alpha.